We begin with the raw amino-acid sequence, 188 residues long: Selenoprotein S B (188 aa).

A helical membrane pass occupies residues 29 to 49; it reads EALSNYGWYILLGCIVIYFLI. Basic and acidic residues predominate over residues 116–125; the sequence is TWDRMQEGKS. The tract at residues 116 to 188 is disordered; sequence TWDRMQEGKS…RGPSSGGSUG (73 aa). Low complexity predominate over residues 136–147; sequence ASPRTSTSSSAP. A non-standard amino acid (selenocysteine) is located at residue Sec187.

Belongs to the selenoprotein S family.

It localises to the endoplasmic reticulum membrane. The protein resides in the cytoplasm. Functionally, involved in the degradation process of misfolded endoplasmic reticulum (ER) luminal proteins. Participates in the transfer of misfolded proteins from the ER to the cytosol, where they are destroyed by the proteasome in a ubiquitin-dependent manner. In Xenopus laevis (African clawed frog), this protein is Selenoprotein S B (vimp-b).